Here is a 537-residue protein sequence, read N- to C-terminus: Eukaryotic translation initiation factor 3 subunit L (537 aa).

Positions 301–513 constitute a PCI domain; it reads TFSSILLYIQ…IHIADTKVSH (213 aa).

The protein belongs to the eIF-3 subunit L family. In terms of assembly, component of the eukaryotic translation initiation factor 3 (eIF-3) complex.

The protein localises to the cytoplasm. In terms of biological role, component of the eukaryotic translation initiation factor 3 (eIF-3) complex, which is involved in protein synthesis of a specialized repertoire of mRNAs and, together with other initiation factors, stimulates binding of mRNA and methionyl-tRNAi to the 40S ribosome. The eIF-3 complex specifically targets and initiates translation of a subset of mRNAs involved in cell proliferation. The sequence is that of Eukaryotic translation initiation factor 3 subunit L from Aedes aegypti (Yellowfever mosquito).